The following is a 192-amino-acid chain: Large ribosomal subunit protein bL9 (192 aa).

The interval 172 to 192 is disordered; sequence DALRPEDFFDPEADGVDEDEA. The segment covering 179–192 has biased composition (acidic residues); the sequence is FFDPEADGVDEDEA.

It belongs to the bacterial ribosomal protein bL9 family.

Functionally, binds to the 23S rRNA. The chain is Large ribosomal subunit protein bL9 from Rhizobium leguminosarum bv. trifolii (strain WSM2304).